Consider the following 440-residue polypeptide: Protein disulfide-isomerase A6 (440 aa).

Residues 1–19 (MALLVLGLVSCTFFLAVNG) form the signal peptide. Thioredoxin domains lie at 20–133 (LYSS…ALRQ) and 154–287 (SDSS…EDIA). Residues C55 and C58 each act as nucleophile in the active site. The cysteines at positions 55 and 58 are disulfide-linked. Residue S129 is modified to Phosphoserine. Positions 141-161 (GRSGGYSSGKQGRSDSSSKKD) are disordered. A compositionally biased stretch (basic and acidic residues) spans 152–161 (GRSDSSSKKD). S156 carries the post-translational modification Phosphoserine; by FAM20C. S158 bears the Phosphoserine mark. Catalysis depends on nucleophile residues C190 and C193. C190 and C193 form a disulfide bridge. Residue S428 is modified to Phosphoserine. Residues 437–440 (KDEL) carry the Prevents secretion from ER motif.

The protein belongs to the protein disulfide isomerase family. Part of a large chaperone multiprotein complex comprising DNAJB11, HSP90B1, HSPA5, HYOU, PDIA2, PDIA4, PDIA6, PPIB, SDF2L1, UGGT1 and very small amounts of ERP29, but not, or at very low levels, CALR nor CANX. Interacts with MICA on the surface of tumor cells, leading to MICA disulfide bond reduction which is required for its release from tumor cells. Interacts with ITGB3 following platelet stimulation. Interacts with ERN1; the interaction is direct. Interacts with EIF2AK3. Expressed in platelets (at protein level).

The protein resides in the endoplasmic reticulum lumen. Its subcellular location is the cell membrane. The protein localises to the melanosome. The catalysed reaction is Catalyzes the rearrangement of -S-S- bonds in proteins.. May function as a chaperone that inhibits aggregation of misfolded proteins. Negatively regulates the unfolded protein response (UPR) through binding to UPR sensors such as ERN1, which in turn inactivates ERN1 signaling. May also regulate the UPR via the EIF2AK3 UPR sensor. Plays a role in platelet aggregation and activation by agonists such as convulxin, collagen and thrombin. This chain is Protein disulfide-isomerase A6 (PDIA6), found in Homo sapiens (Human).